Reading from the N-terminus, the 561-residue chain is Methionine--tRNA ligase (561 aa).

The 'HIGH' region motif lies at proline 11–asparagine 21. Zn(2+) is bound by residues cysteine 143, cysteine 146, cysteine 156, and cysteine 159. Lysine 334 lines the ATP pocket.

Belongs to the class-I aminoacyl-tRNA synthetase family. MetG type 1 subfamily. Zn(2+) serves as cofactor.

It is found in the cytoplasm. The catalysed reaction is tRNA(Met) + L-methionine + ATP = L-methionyl-tRNA(Met) + AMP + diphosphate. Its function is as follows. Is required not only for elongation of protein synthesis but also for the initiation of all mRNA translation through initiator tRNA(fMet) aminoacylation. This is Methionine--tRNA ligase from Ignicoccus hospitalis (strain KIN4/I / DSM 18386 / JCM 14125).